We begin with the raw amino-acid sequence, 229 residues long: Tubulin-specific chaperone B (229 aa).

The CAP-Gly domain occupies 170–212 (GATKFKEGVWVGVKYDEPVGKNDGSVAGVRYFDCDPKYGGFVR).

This sequence belongs to the TBCB family. Supercomplex made of cofactors A to E. Cofactors A and D function by capturing and stabilizing tubulin in a quasi-native conformation. Cofactor E binds to the cofactor D-tubulin complex; interaction with cofactor C then causes the release of tubulin polypeptides that are committed to the native state.

The protein localises to the cytoplasm. The protein resides in the cytoskeleton. Binds to alpha-tubulin folding intermediates after their interaction with cytosolic chaperonin in the pathway leading from newly synthesized tubulin to properly folded heterodimer. The protein is Tubulin-specific chaperone B of Caenorhabditis elegans.